A 503-amino-acid chain; its full sequence is Lithocholate 6-beta-hydroxylase (503 aa).

Cysteine 442 serves as a coordination point for heme.

The protein belongs to the cytochrome P450 family. The cofactor is heme.

The protein resides in the endoplasmic reticulum membrane. The protein localises to the microsome membrane. The enzyme catalyses lithocholate + reduced [NADPH--hemoprotein reductase] + O2 = 6beta-hydroxylithocholate + oxidized [NADPH--hemoprotein reductase] + H2O + H(+). In terms of biological role, catalyzes the 6 beta-hydroxylation of lithocholic acid and steroid hormones. The chain is Lithocholate 6-beta-hydroxylase (CYP3A10) from Mesocricetus auratus (Golden hamster).